The primary structure comprises 432 residues: Gamma-glutamyl phosphate reductase (432 aa).

It belongs to the gamma-glutamyl phosphate reductase family.

The protein localises to the cytoplasm. The catalysed reaction is L-glutamate 5-semialdehyde + phosphate + NADP(+) = L-glutamyl 5-phosphate + NADPH + H(+). Its pathway is amino-acid biosynthesis; L-proline biosynthesis; L-glutamate 5-semialdehyde from L-glutamate: step 2/2. In terms of biological role, catalyzes the NADPH-dependent reduction of L-glutamate 5-phosphate into L-glutamate 5-semialdehyde and phosphate. The product spontaneously undergoes cyclization to form 1-pyrroline-5-carboxylate. The chain is Gamma-glutamyl phosphate reductase from Methylorubrum extorquens (strain CM4 / NCIMB 13688) (Methylobacterium extorquens).